The primary structure comprises 398 residues: Succinate--CoA ligase [ADP-forming] subunit beta (398 aa).

An ATP-grasp domain is found at 9-254 (KALLHEFGVP…ETEEDAKEIE (246 aa)). ATP contacts are provided by residues lysine 46, 53–55 (GRG), glutamate 109, serine 112, and glutamate 117. The Mg(2+) site is built by asparagine 209 and aspartate 223. Substrate is bound by residues asparagine 274 and 331–333 (GIM).

This sequence belongs to the succinate/malate CoA ligase beta subunit family. Heterotetramer of two alpha and two beta subunits. It depends on Mg(2+) as a cofactor.

It catalyses the reaction succinate + ATP + CoA = succinyl-CoA + ADP + phosphate. The catalysed reaction is GTP + succinate + CoA = succinyl-CoA + GDP + phosphate. It participates in carbohydrate metabolism; tricarboxylic acid cycle; succinate from succinyl-CoA (ligase route): step 1/1. In terms of biological role, succinyl-CoA synthetase functions in the citric acid cycle (TCA), coupling the hydrolysis of succinyl-CoA to the synthesis of either ATP or GTP and thus represents the only step of substrate-level phosphorylation in the TCA. The beta subunit provides nucleotide specificity of the enzyme and binds the substrate succinate, while the binding sites for coenzyme A and phosphate are found in the alpha subunit. This chain is Succinate--CoA ligase [ADP-forming] subunit beta, found in Bradyrhizobium sp. (strain BTAi1 / ATCC BAA-1182).